We begin with the raw amino-acid sequence, 271 residues long: Probable redox regulatory protein SCO3349 (271 aa).

Disordered regions lie at residues 1–21 (MPKTKKAKDEKSAKKDKKHIA) and 109–130 (AEGTRNGWTSEDDEGSRQTRPF). Basic and acidic residues predominate over residues 7–21 (AKDEKSAKKDKKHIA).

The protein belongs to the Rv0495c family.

Essential for maintaining intracellular redox homeostasis. This Streptomyces coelicolor (strain ATCC BAA-471 / A3(2) / M145) protein is Probable redox regulatory protein SCO3349.